A 2843-amino-acid polypeptide reads, in one-letter code: Adenomatous polyposis coli protein (2843 aa).

The residue at position 2 (A2) is an N-acetylalanine. A coiled-coil region spans residues 2 to 61 (AAASYDQLLKQVEALKMENSNLRQELEDNSNHLTKLETEASNMKEVLKQLQGSIEDEAMA). Residues S107 and S111 each carry the phosphoserine modification. Residues 127 to 248 (SRESTGYLEE…ATEAERSSQN (122 aa)) are a coiled coil. A disordered region spans residues 239–305 (ATEAERSSQN…STHSAPRRLT (67 aa)). A compositionally biased stretch (basic and acidic residues) spans 241–261 (EAERSSQNKHETGSHDAERQN). Residues 271 to 282 (MATSGNGQGSTT) are compositionally biased toward polar residues. The segment covering 290-299 (SVLSSSSTHS) has biased composition (low complexity). ARM repeat units lie at residues 453-495 (LMKL…HYSI), 505-547 (LTNL…IASV), 548-591 (LRNL…VLSA), 592-638 (LWNL…GGGI), 639-683 (LRNV…ACGT), 684-725 (LWNL…SAAA), and 726-767 (LRNL…LDAQ). S744, S748, and S780 each carry phosphoserine. The segment at 828–878 (TTVLPSSSSSRGSLDSSRSEKDRSLERERGIGLGNYHPATENPGTSSKRGL) is disordered. Over residues 833–843 (SSSSSRGSLDS) the composition is skewed to low complexity. Residues 844-857 (SRSEKDRSLERERG) show a composition bias toward basic and acidic residues. The segment covering 869 to 878 (NPGTSSKRGL) has biased composition (polar residues). S908 is subject to Phosphoserine. 2 disordered regions span residues 923–943 (RRSSAAHTHSNTYNFTKSENS) and 958–987 (RSSNDSLNSVSSSDGYGKRGQMKPSIESYS). Polar residues predominate over residues 927–943 (AAHTHSNTYNFTKSENS). The segment at 960-1337 (SNDSLNSVSS…QHPRTKSSRL (378 aa)) is responsible for down-regulation through a process mediated by direct ubiquitination. Residues 961 to 971 (NDSLNSVSSSD) show a composition bias toward low complexity. Residues S987, S1038, and S1042 each carry the phosphoserine modification. Residues 1020-1169 (ELDTPINYSL…TNYSIKYNEE (150 aa)) form an interaction with catenins region. Disordered stretches follow at residues 1099–1169 (VSPY…YNEE), 1190–1244 (SQKQ…GQPQ), and 1311–1376 (IGTR…PEHY). Over residues 1107–1130 (ANGSETNRVGSNHGINQNVSQSLC) the composition is skewed to polar residues. A compositionally biased stretch (basic and acidic residues) spans 1146–1159 (RYSEEEQHEEEERP). Over residues 1190-1224 (SQKQSFSFSKSSSGQSSKTEHMSSSSENTSTPSSN) the composition is skewed to low complexity. The span at 1225-1244 (AKRQNQLHPSSAQSRSGQPQ) shows a compositional bias: polar residues. Composition is skewed to low complexity over residues 1335-1345 (SRLQGSSLSSE) and 1355-1366 (SSGAKSPSKSGA). A phosphoserine mark is found at S1360, S1371, S1385, S1392, and S1395. Disordered stretches follow at residues 1403 to 1475 (SSVQ…VNAA), 1526 to 1569 (PPVQ…DSDD), 1583 to 1611 (MPTKSSRKAKKPAQTASKLPPPVARKPSQ), 1664 to 1717 (SPPN…DDNK), and 1729 to 1836 (NSAM…RVRG). Residue T1438 is modified to Phosphothreonine. Composition is skewed to basic and acidic residues over residues 1448–1466 (TKREVPKNKAPTAEKRESG) and 1540–1564 (EQPKESNENQEKEAEKTIDSEKDLL). S1567 is subject to Phosphoserine. Residues 1683 to 1698 (EFEKRDTIPTEGRSTD) are compositionally biased toward basic and acidic residues. A compositionally biased stretch (basic residues) spans 1735–1744 (GKSHKPFRVK). Residue S1774 is modified to Phosphoserine. 2 stretches are compositionally biased toward basic and acidic residues: residues 1785 to 1794 (YRTRVRKNAD) and 1804 to 1813 (VFSDNKDSKK). A phosphoserine mark is found at S1861, S1863, and S1864. Positions 1866 to 1893 (DFDDDDVDLSREKAELRKAKENKESEAK) are highly charged. A compositionally biased stretch (basic and acidic residues) spans 1881 to 1896 (LRKAKENKESEAKVTS). Disordered stretches follow at residues 1881–1950 (LRKA…TDEK), 1965–2011 (HNSS…APKS), and 2043–2072 (ISSAMPKKKKPSRLKGDNEKHSPRNMGGIL). Polar residues-rich tracts occupy residues 1897 to 1913 (HTELTSNQQSANKTQAI) and 1928 to 1938 (QKQSTFPQSSK). Positions 1939–1950 (DIPDRGAATDEK) are enriched in basic and acidic residues. Phosphoserine occurs at positions 1971 and 1973. The span at 1979 to 1991 (NNNKENEPIKETE) shows a compositional bias: basic and acidic residues. The segment at 2035-2059 (EDDLLQECISSAMPKKKKPSRLKGD) is interaction with AXIN1. A phosphoserine mark is found at S2088, S2093, S2125, S2129, S2130, and S2132. Disordered stretches follow at residues 2147–2635 (PFHL…SGAT) and 2667–2714 (NNPR…VPMR). T2151 carries the post-translational modification Phosphothreonine. Residues 2167 to 2674 (ILKPGEKSTL…PINNPRSGRS (508 aa)) are basic region. Residues 2169 to 2187 (KPGEKSTLETKKIESESKG) are compositionally biased toward basic and acidic residues. 2 stretches are compositionally biased toward polar residues: residues 2203-2223 (VRSNSEISGQMKQPLQANMPS) and 2257-2271 (ASKSPSEGQTATTSP). S2260, S2270, and S2283 each carry phosphoserine. The span at 2286-2331 (ARQTSQIGGSSKAPSRSGSRDSTPSRPAQQPLSRPIQSPGRNSISP) shows a compositional bias: polar residues. The span at 2348–2369 (TSSPSTASTKSSGSGKMSYTSP) shows a compositional bias: low complexity. Polar residues-rich tracts occupy residues 2370 to 2409 (GRQMSQQNLTKQTGLSKNASSIPRSESASKGLNQMNNGNG) and 2418 to 2427 (RMSSTKSSGS). The span at 2459–2477 (SASFESLSPSSRPASPTRS) shows a compositional bias: low complexity. 2 positions are modified to phosphoserine: S2473 and S2535. The interaction with DLG1 stretch occupies residues 2475 to 2843 (TRSQAQTPVL…HSGSYLVTSV (369 aa)). Residues 2518 to 2535 (NDGRPAKRHDIARSHSES) show a composition bias toward basic and acidic residues. Positions 2555–2568 (SSSLPRVSTWRRTG) are enriched in polar residues. Residue S2569 is modified to Phosphoserine. Positions 2569-2579 (SSSSILSASSE) are enriched in low complexity. The span at 2580 to 2592 (SSEKAKSEDEKHV) shows a compositional bias: basic and acidic residues. 3 stretches are compositionally biased toward polar residues: residues 2593–2608 (NSISGTKQSKENQVSA), 2620–2635 (FSPTNSTSQTVSSGAT), and 2668–2679 (NPRSGRSPTGNT). A phosphoserine mark is found at S2671 and S2674. Residues 2674–2843 (SPTGNTPPVI…HSGSYLVTSV (170 aa)) form an interaction with MAPRE1 region. Phosphothreonine is present on T2679. A phosphoserine mark is found at S2710 and S2724. The disordered stretch occupies residues 2729 to 2843 (DAPDQKGTEI…HSGSYLVTSV (115 aa)). Positions 2741–2757 (GQNNPVPVSETNESSIV) are enriched in polar residues. The segment covering 2763-2774 (SSSSSSKHSSPS) has biased composition (low complexity). Over residues 2784 to 2812 (FNYNPSPRKSSADSTSARPSQIPTPVNNN) the composition is skewed to polar residues. At S2789 the chain carries Phosphoserine. A Microtubule tip localization signal motif is present at residues 2803–2806 (SQIP). The short motif at 2841-2843 (TSV) is the PDZ-binding element.

Belongs to the adenomatous polyposis coli (APC) family. In terms of assembly, forms homooligomers. Found in a complex consisting of ARHGEF4, APC and CTNNB1. Found in a complex composed of MACF1, APC, AXIN1, CTNNB1 and GSK3B. The complex composed, at least, of APC, CTNNB1 and GSK3B interacts with JPT1; the interaction requires the inactive form of GSK3B (phosphorylated at 'Ser-9'). Interacts with APC2. Interacts with DLG1 (via PDZ domains) and DLG3 (via PDZ domains). Interacts with alpha- and beta-catenins. Interacts with AXIN1 (via RGS domain). Interacts with ARHGEF4 (via N-terminus). Interacts (via C-terminal residues 2674-2843) with MAPRE1 (via C-terminal residues 206-211); the interaction inhibits association with and bundling of F-actin. Interacts with MAPRE2 and MAPRE3 (via C-terminus). Interacts with DIAPH1; DIAPH1 acts as a scaffold protein for MAPRE1 and APC to stabilize microtubules and promote cell migration. Interacts with DIAPH2. Interacts with SCRIB; may mediate APC targeting to adherens junctions of epithelial cells. Interacts with SPATA13 (via N-terminus and SH3 domain). Interacts with ASAP1 (via SH3 domain). Interacts (at the cell membrane) with AMER1 and AMER2 (via ARM repeats). Interacts with KHDRBS1. Interacts with actin; binds both to F-actin and actin filament bundles. Post-translationally, phosphorylated; phosphorylation enhances the F-actin bundling activity. Phosphorylated by GSK3B. Ubiquitinated, leading to its degradation by the proteasome. Ubiquitination is facilitated by Axin. Deubiquitinated by ZRANB1/TRABID. As to expression, expressed in a variety of tissues: brain, small intestine, colon, thymus, skeletal muscle, heart, prostate, lung, spleen, ovary, testis kidney, placenta, blood and liver. Isoform 1A: Very strongly expressed in brain but has relatively low expression levels in other tissues. Isoform 1B: Predominant form in all tissues except for brain, including gastric mucosa and blood.

It localises to the cell junction. Its subcellular location is the adherens junction. It is found in the cytoplasm. The protein localises to the cytoskeleton. The protein resides in the cell projection. It localises to the lamellipodium. Its subcellular location is the ruffle membrane. It is found in the cell membrane. Its function is as follows. Tumor suppressor. Promotes rapid degradation of CTNNB1 and participates in Wnt signaling as a negative regulator. APC activity is correlated with its phosphorylation state. Activates the GEF activity of SPATA13 and ARHGEF4. Plays a role in hepatocyte growth factor (HGF)-induced cell migration. Required for MMP9 up-regulation via the JNK signaling pathway in colorectal tumor cells. Associates with both microtubules and actin filaments, components of the cytoskeleton. Plays a role in mediating the organization of F-actin into ordered bundles. Functions downstream of Rho GTPases and DIAPH1 to selectively stabilize microtubules. Acts as a mediator of ERBB2-dependent stabilization of microtubules at the cell cortex. It is required for the localization of MACF1 to the cell membrane and this localization of MACF1 is critical for its function in microtubule stabilization. This is Adenomatous polyposis coli protein from Homo sapiens (Human).